Reading from the N-terminus, the 254-residue chain is Triosephosphate isomerase (254 aa).

10 to 12 contributes to the substrate binding site; the sequence is NWK. His-99 acts as the Electrophile in catalysis. The active-site Proton acceptor is Glu-169. Substrate is bound by residues Gly-175, Ser-215, and 236–237; that span reads GG.

This sequence belongs to the triosephosphate isomerase family. As to quaternary structure, homodimer.

The protein localises to the cytoplasm. The catalysed reaction is D-glyceraldehyde 3-phosphate = dihydroxyacetone phosphate. It participates in carbohydrate biosynthesis; gluconeogenesis. The protein operates within carbohydrate degradation; glycolysis; D-glyceraldehyde 3-phosphate from glycerone phosphate: step 1/1. Functionally, involved in the gluconeogenesis. Catalyzes stereospecifically the conversion of dihydroxyacetone phosphate (DHAP) to D-glyceraldehyde-3-phosphate (G3P). In Chlamydia abortus (strain DSM 27085 / S26/3) (Chlamydophila abortus), this protein is Triosephosphate isomerase.